A 914-amino-acid chain; its full sequence is Protein translocase subunit SecA (914 aa).

ATP is bound by residues Q87, 105-109 (GEGKT), and D508. Zn(2+) contacts are provided by C898, C900, C909, and H910.

Belongs to the SecA family. As to quaternary structure, monomer and homodimer. Part of the essential Sec protein translocation apparatus which comprises SecA, SecYEG and auxiliary proteins SecDF-YajC and YidC. The cofactor is Zn(2+).

It localises to the cell inner membrane. The protein localises to the cytoplasm. It catalyses the reaction ATP + H2O + cellular proteinSide 1 = ADP + phosphate + cellular proteinSide 2.. In terms of biological role, part of the Sec protein translocase complex. Interacts with the SecYEG preprotein conducting channel. Has a central role in coupling the hydrolysis of ATP to the transfer of proteins into and across the cell membrane, serving both as a receptor for the preprotein-SecB complex and as an ATP-driven molecular motor driving the stepwise translocation of polypeptide chains across the membrane. The sequence is that of Protein translocase subunit SecA from Xylella fastidiosa (strain M23).